The sequence spans 339 residues: Trace amine-associated receptor 1 (339 aa).

Topologically, residues 1–24 are extracellular; the sequence is MMPFCHNIINISCVKNNWSNDVRA. 3 disulfides stabilise this stretch: C5–C178, C13–C88, and C96–C182. N-linked (GlcNAc...) asparagine glycans are attached at residues N10 and N17. A helical membrane pass occupies residues 25 to 49; it reads SLYSLMVLIILTTLVGNLIVIVSIS. The Cytoplasmic portion of the chain corresponds to 50–59; the sequence is HFKQLHTPTN. The helical transmembrane segment at 60–81 threads the bilayer; that stretch reads WLIHSMATVDFLLGCLVMPYSM. The Extracellular portion of the chain corresponds to 82–96; that stretch reads VRSAEHCWYFGEVFC. The chain crosses the membrane as a helical span at residues 97–119; the sequence is KIHTSTDIMLSSASIFHLSFISI. D103 contacts 2-phenylethylamine. Over 120 to 139 the chain is Cytoplasmic; sequence DRYYAVCDPLRYKAKMNILV. Residues 140 to 161 form a helical membrane-spanning segment; the sequence is ICVMIFISWSVPAVFAFGMIFL. The Extracellular portion of the chain corresponds to 162-188; the sequence is ELNFKGAEEIYYKHVHCRGGCSVFFSK. The tract at residues 175–186 is extracellular Loop 2 (ECL2); it reads HVHCRGGCSVFF. The helical transmembrane segment at 189–211 threads the bilayer; the sequence is ISGVLTFMTSFYIPGSIMLCVYY. Topologically, residues 212 to 249 are cytoplasmic; sequence RIYLIAKEQARLISDANQKLQIGLEMKNGISQSKERKA. Residues 250–273 traverse the membrane as a helical segment; that stretch reads VKTLGIVMGVFLICWCPFFICTVM. The Extracellular portion of the chain corresponds to 274 to 286; sequence DPFLHYIIPPTLN. Residues 287-307 form a helical membrane-spanning segment; sequence DVLIWFGYLNSTFNPMVYAFF. Over 308–339 the chain is Cytoplasmic; it reads YPWFRKALKMMLFGKIFQKDSSRCKLFLELSS.

It belongs to the G-protein coupled receptor 1 family. In terms of tissue distribution, expressed at low level in both the central and peripheral nervous system. Moderately expressed in stomach. Low levels in amygdala, kidney, and lung, and small intestine. Trace amounts in cerebellum, dorsal root ganglia, hippocampus, hypothalamus, liver, medulla, pancreas, pituitary, pontine reticular formation, prostate, skeletal muscle and spleen.

The protein resides in the endomembrane system. It localises to the endoplasmic reticulum membrane. The protein localises to the cell membrane. Activated by SEP-363856 small molecule: IHCH-7179 acts both as an agonist activator for HTR1A and TAAR1. In terms of biological role, intracellular G-protein coupled receptor for trace amines, which recognizes endogenous amine-containing metabolites such as beta-phenylethylamine (beta-PEA), 3-iodothyronamine (T1AM), isoamylamine (IAA), cadaverine (CAD), cyclohexylamine (CHA), p-tyramine (p-TYR), trimethylamine (TMA), octopamine and tryptamine. Also functions as a receptor for various drugs and psychoactive substances, such as amphetamine and methamphetamine. Unresponsive to classical biogenic amines, such as epinephrine and histamine and only partially activated by dopamine and serotonin. Expressed in both the central and peripheral nervous system: TAAR1 activation regulates the activity of several neurotransmitter signaling pathways by (1) decreasing the basal firing rates of the neurons involved and by (2) lowering the sensitivity of receptors to neurotransmitters. Ligand binding causes a conformation change that triggers signaling via guanine nucleotide-binding proteins (G proteins) and modulates the activity of downstream effectors. TAAR1 is coupled with different G(i)/G(o)-, G(s)- or G(q)/G(11) classes of G alpha proteins depending on the ligand. CAD-binding is coupled to G(i)/G(o) G alpha proteins and mediates inhibition of adenylate cyclase activity. T1AM- or beta-PEA-binding is coupled to G(s) G alpha proteins and mediates activation of adenylate cyclase activity. CHA- or IAA-binding is coupled to G(q)/G(11) G alpha proteins and activates phospholipase C-beta, releasing diacylglycerol (DAG) and inositol 1,4,5-trisphosphate (IP3) second messengers. TMA-binding is coupled with all three G(i)/G(o)-, G(s)- or G(q)/G(11) G alpha protein subtypes. Amphetamine-binding is coupled with G(s)- or G(12)/G(13) G alpha protein subtypes. This Homo sapiens (Human) protein is Trace amine-associated receptor 1.